Consider the following 581-residue polypeptide: Caprolactamase subunit beta (581 aa).

Residues D41, H99, D102, and H124 each contribute to the Zn(2+) site.

Belongs to the HyuB family. The caprolactamase is a heterotetramer composed of two alpha subunits (CapA) and two beta subunits (CapB). Requires Zn(2+) as cofactor.

With respect to regulation, activity is dependent on the presence of ATP and bicarbonate. The requirement for bicarbonate may be related to allosteric activation through conformational effects, but it is also conceivable that carboxyphosphate is formed and acts as a mediator in caprolactam activation, forming carboxy- or phospholactim. Component of a caprolactamase involved in the degradation of caprolactam, an industrial compound mainly used in the production of Nylon 6. Catalyzes the ATP-dependent hydrolysis of the caprolactam ring to form 6-aminocaproic acid (6-ACA). The beta subunit is responsible for hydrolytic lactam ring opening. The enzyme cannot use 5-oxoproline. This Pseudomonas jessenii protein is Caprolactamase subunit beta.